We begin with the raw amino-acid sequence, 451 residues long: tRNA-2-methylthio-N(6)-dimethylallyladenosine synthase (451 aa).

The MTTase N-terminal domain occupies 5–121; that stretch reads RQYHITTFGC…LQDLLEQVEG (117 aa). [4Fe-4S] cluster is bound by residues C14, C50, C84, C156, C160, and C163. Positions 142–379 constitute a Radical SAM core domain; the sequence is RDSTVTAWVN…NHLVAQKAAE (238 aa). One can recognise a TRAM domain in the interval 382-446; it reads QRYAGRIEEV…AFSLTGEAVE (65 aa).

This sequence belongs to the methylthiotransferase family. MiaB subfamily. As to quaternary structure, monomer. [4Fe-4S] cluster is required as a cofactor.

The protein localises to the cytoplasm. The enzyme catalyses N(6)-dimethylallyladenosine(37) in tRNA + (sulfur carrier)-SH + AH2 + 2 S-adenosyl-L-methionine = 2-methylsulfanyl-N(6)-dimethylallyladenosine(37) in tRNA + (sulfur carrier)-H + 5'-deoxyadenosine + L-methionine + A + S-adenosyl-L-homocysteine + 2 H(+). Its function is as follows. Catalyzes the methylthiolation of N6-(dimethylallyl)adenosine (i(6)A), leading to the formation of 2-methylthio-N6-(dimethylallyl)adenosine (ms(2)i(6)A) at position 37 in tRNAs that read codons beginning with uridine. In Picosynechococcus sp. (strain ATCC 27264 / PCC 7002 / PR-6) (Agmenellum quadruplicatum), this protein is tRNA-2-methylthio-N(6)-dimethylallyladenosine synthase.